The sequence spans 430 residues: 3-phosphoshikimate 1-carboxyvinyltransferase (430 aa).

The tract at residues Met1–Lys20 is disordered. 3-phosphoshikimate is bound by residues Lys20, Ser21, and Arg25. Lys20 contributes to the phosphoenolpyruvate binding site. Positions 91 and 119 each coordinate phosphoenolpyruvate. Positions 164, 165, 166, 192, 312, and 339 each coordinate 3-phosphoshikimate. A phosphoenolpyruvate-binding site is contributed by Gln166. Asp312 acts as the Proton acceptor in catalysis. The phosphoenolpyruvate site is built by Arg343 and Arg386.

Belongs to the EPSP synthase family. In terms of assembly, monomer.

Its subcellular location is the cytoplasm. It carries out the reaction 3-phosphoshikimate + phosphoenolpyruvate = 5-O-(1-carboxyvinyl)-3-phosphoshikimate + phosphate. Its pathway is metabolic intermediate biosynthesis; chorismate biosynthesis. Functionally, catalyzes the transfer of the enolpyruvyl moiety of phosphoenolpyruvate (PEP) to the 5-hydroxyl of shikimate-3-phosphate (S3P) to produce enolpyruvyl shikimate-3-phosphate and inorganic phosphate. The chain is 3-phosphoshikimate 1-carboxyvinyltransferase from Halobacterium salinarum (strain ATCC 29341 / DSM 671 / R1).